Here is a 936-residue protein sequence, read N- to C-terminus: Sine oculis-binding protein homolog A (936 aa).

Residues 1 to 14 (MAEMEKEGRPPESK) show a composition bias toward basic and acidic residues. Disordered stretches follow at residues 1-46 (MAEM…GQAG) and 108-151 (ASTL…HGGL). Residues 108-144 (ASTLENSSGSPPHANSSGSTPTSRNGVTAESSVNPSS) show a composition bias toward polar residues. FCS-type zinc fingers lie at residues 169 to 207 (EDSS…KCFA) and 247 to 287 (LKTN…KCLN). Disordered stretches follow at residues 311 to 330 (LPTS…LTPE), 336 to 424 (LSEL…VMTP), 486 to 511 (SPHL…HPAA), 574 to 632 (NPQR…KQTE), 697 to 727 (PPPA…DTYS), and 842 to 877 (DSAG…EDHA). A compositionally biased stretch (low complexity) spans 349–382 (GATIAGPSGSTSGSPSEAGTVCSSSSSSSSSSSS). A compositionally biased stretch (pro residues) spans 395 to 404 (SLPPPHPPPI). Composition is skewed to polar residues over residues 617-632 (PPNS…KQTE), 708-717 (DGSTSISTGT), and 850-859 (NDQSAITTGT).

The protein belongs to the SOBP family.

Its function is as follows. Implicated in development of the cochlea. The polypeptide is Sine oculis-binding protein homolog A (sobpa) (Danio rerio (Zebrafish)).